A 330-amino-acid polypeptide reads, in one-letter code: Zinc finger protein Gfi-1b (330 aa).

Residues 1–20 (MPRSFLVKSKKAHTYHQPRA) form an SNAG domain region. Disordered stretches follow at residues 1 to 21 (MPRS…PRAQ) and 75 to 99 (MASA…SESP). At Lys8 the chain carries N6,N6-dimethyllysine. The tract at residues 91–330 (GESPLSESPP…RHRESQHNLK (240 aa)) is interaction with ARIH2. 6 C2H2-type zinc fingers span residues 163–186 (YHCV…RRSH), 192–214 (FACD…THVH), 220–242 (FECR…LLIH), 248–270 (YPCQ…TYIH), 276–298 (HKCQ…SRKH), and 304–327 (FSCE…ESQH). Residues 164-330 (HCVKCNKVFS…RHRESQHNLK (167 aa)) form a mediates interaction with GATA1 region.

As to quaternary structure, interacts with histone methyltransferases EHMT2 and SUV39H1. Interacts with ARIH2 (via RING-type 2) and with RUNX1T1. Forms a complex with GATA1. Component of a RCOR-GFI-KDM1A-HDAC complex. Interacts directly with RCOR1, KDM1A and HDAC2. Post-translationally, methylation at Lys-8 in the SNAG domain seems required for the recruitment of the corepressor complex. Expressed in bone marrow and in spleen. Detected in hematopoietic stem cells, erythroblasts, and megakaryocytes. Expressed in thymocytes.

Its subcellular location is the nucleus. In terms of biological role, essential proto-oncogenic transcriptional regulator necessary for development and differentiation of erythroid and megakaryocytic lineages. Component of a RCOR-GFI-KDM1A-HDAC complex that suppresses, via histone deacetylase (HDAC) recruitment, a number of genes implicated in multilineage blood cell development and controls hematopoietic differentiation. Transcriptional repressor or activator depending on both promoter and cell type context; represses promoter activity of SOCS1 and SOCS3 and thus, may regulate cytokine signaling pathways. Cooperates with GATA1 to repress target gene transcription, such as the apoptosis regulator BCL2L1; GFI1B silencing in leukemic cell lines markedly increase apoptosis rate. Inhibits down-regulation of MYC and MYB as well as the cyclin-dependent kinase inhibitor CDKN1A/P21WAF1 in IL6-treated myelomonocytic cells. Represses expression of GATA3 in T-cell lymphomas and inhibits GATA1-mediated transcription; as GATA1 also mediates erythroid GFI1B transcription, both GATA1 and GFI1B participate in a feedback regulatory pathway controlling the expression of GFI1B gene in erythroid cells. Suppresses GATA1-mediated stimulation of GFI1B promoter through protein interaction. Binds to gamma-satellite DNA and to its own promoter, auto-repressing its own expression. Alters histone methylation by recruiting histone methyltransferase to target genes promoters. Plays a role in heterochromatin formation. In Mus musculus (Mouse), this protein is Zinc finger protein Gfi-1b (Gfi1b).